We begin with the raw amino-acid sequence, 539 residues long: Interleukin-2 receptor subunit beta (539 aa).

An N-terminal signal peptide occupies residues 1–26 (MATIALPWSLSLYVFLLLLATPWASA). Residues 27-240 (AVKNCSHLEC…RTRPADPMKE (214 aa)) are Extracellular-facing. Residues Asn-30, Asn-43, Asn-55, and Asn-71 are each glycosylated (N-linked (GlcNAc...) asparagine). A disulfide bond links Cys-36 and Cys-46. An intrachain disulfide couples Cys-74 to Cys-86. The Fibronectin type-III domain occupies 135 to 235 (APHSLQVLHI…QPLTFRTRPA (101 aa)). 2 N-linked (GlcNAc...) asparagine glycosylation sites follow: Asn-150 and Asn-216. The WSXWS motif motif lies at 221-225 (WSPWS). A helical membrane pass occupies residues 241–268 (ILPMSWLRYLLLVLGCFSGFFSCVYILV). The Cytoplasmic portion of the chain corresponds to 269–539 (KCRYLGPWLK…LQAQDSVHLI (271 aa)). A Box 1 motif motif is present at residues 281–289 (LKCHIPDPS). 3 disordered regions span residues 395–419 (VEED…GEQD), 440–465 (PNTA…LPSL), and 477–516 (LERM…QGPI).

It belongs to the type I cytokine receptor family. Type 4 subfamily. Non-covalent dimer of an alpha and a beta subunit. IL2R exists in 3 different forms: a high affinity dimer, an intermediate affinity monomer (beta subunit), and a low affinity monomer (alpha subunit). The high and intermediate affinity forms also associate with a gamma subunit. Interacts with SHB upon interleukin stimulation.

Its subcellular location is the cell membrane. It is found in the cell surface. In terms of biological role, receptor for interleukin-2. This beta subunit is involved in receptor mediated endocytosis and transduces the mitogenic signals of IL2. Probably in association with IL15RA, involved in the stimulation of neutrophil phagocytosis by IL15. This Mus musculus (Mouse) protein is Interleukin-2 receptor subunit beta (Il2rb).